A 156-amino-acid polypeptide reads, in one-letter code: Zinc finger SWIM domain-containing protein 7 homolog (156 aa).

Residues 82 to 120 form an SWIM-type zinc finger; sequence YMCLIQGDYCSCPSFNFSVLLKSDSVYCKHQISSILAEI.

The protein belongs to the SWS1 family.

The protein localises to the nucleus. May be involved in the homologous recombination repair (HRR) pathway of double-stranded DNA breaks arising during DNA replication or induced by DNA-damaging agents. The polypeptide is Zinc finger SWIM domain-containing protein 7 homolog (zswim7) (Dictyostelium discoideum (Social amoeba)).